The primary structure comprises 336 residues: Glyceraldehyde-3-phosphate dehydrogenase (336 aa).

Residues 12 to 13 (RI), Asp34, Arg78, and Thr121 contribute to the NAD(+) site. Residues 151–153 (SCT), Thr182, Arg199, 212–213 (TG), and Arg235 contribute to the D-glyceraldehyde 3-phosphate site. Residue Cys152 is the Nucleophile of the active site. Asn316 contributes to the NAD(+) binding site.

The protein belongs to the glyceraldehyde-3-phosphate dehydrogenase family. In terms of assembly, homotetramer.

The protein resides in the cytoplasm. It catalyses the reaction D-glyceraldehyde 3-phosphate + phosphate + NAD(+) = (2R)-3-phospho-glyceroyl phosphate + NADH + H(+). The protein operates within carbohydrate degradation; glycolysis; pyruvate from D-glyceraldehyde 3-phosphate: step 1/5. Functionally, also binds human plasminogen. Catalyzes the oxidative phosphorylation of glyceraldehyde 3-phosphate (G3P) to 1,3-bisphosphoglycerate (BPG) using the cofactor NAD. The first reaction step involves the formation of a hemiacetal intermediate between G3P and a cysteine residue, and this hemiacetal intermediate is then oxidized to a thioester, with concomitant reduction of NAD to NADH. The reduced NADH is then exchanged with the second NAD, and the thioester is attacked by a nucleophilic inorganic phosphate to produce BPG. The sequence is that of Glyceraldehyde-3-phosphate dehydrogenase (gap) from Streptococcus pyogenes.